The primary structure comprises 88 residues: Small ribosomal subunit protein uS15 (88 aa).

The protein belongs to the universal ribosomal protein uS15 family. Part of the 30S ribosomal subunit. Forms a bridge to the 50S subunit in the 70S ribosome, contacting the 23S rRNA.

Functionally, one of the primary rRNA binding proteins, it binds directly to 16S rRNA where it helps nucleate assembly of the platform of the 30S subunit by binding and bridging several RNA helices of the 16S rRNA. Its function is as follows. Forms an intersubunit bridge (bridge B4) with the 23S rRNA of the 50S subunit in the ribosome. The polypeptide is Small ribosomal subunit protein uS15 (Geotalea uraniireducens (strain Rf4) (Geobacter uraniireducens)).